Here is a 267-residue protein sequence, read N- to C-terminus: Pyrroline-5-carboxylate reductase (267 aa).

It belongs to the pyrroline-5-carboxylate reductase family.

The protein resides in the cytoplasm. It catalyses the reaction L-proline + NADP(+) = (S)-1-pyrroline-5-carboxylate + NADPH + 2 H(+). It carries out the reaction L-proline + NAD(+) = (S)-1-pyrroline-5-carboxylate + NADH + 2 H(+). Its pathway is amino-acid biosynthesis; L-proline biosynthesis; L-proline from L-glutamate 5-semialdehyde: step 1/1. Functionally, catalyzes the reduction of 1-pyrroline-5-carboxylate (PCA) to L-proline. The protein is Pyrroline-5-carboxylate reductase of Synechocystis sp. (strain ATCC 27184 / PCC 6803 / Kazusa).